The following is a 341-amino-acid chain: Glycerol-3-phosphate dehydrogenase [NAD(P)+] 1 (341 aa).

Residues Ser11, Trp12, Arg32, Arg33, and Lys106 each contribute to the NADPH site. Sn-glycerol 3-phosphate-binding residues include Lys106, Gly137, and Ser139. Ala141 contributes to the NADPH binding site. 5 residues coordinate sn-glycerol 3-phosphate: Lys192, Asp245, Ser255, Arg256, and Asn257. The Proton acceptor role is filled by Lys192. Residue Arg256 participates in NADPH binding. Val280 and Glu282 together coordinate NADPH.

This sequence belongs to the NAD-dependent glycerol-3-phosphate dehydrogenase family.

The protein resides in the cytoplasm. It catalyses the reaction sn-glycerol 3-phosphate + NAD(+) = dihydroxyacetone phosphate + NADH + H(+). The enzyme catalyses sn-glycerol 3-phosphate + NADP(+) = dihydroxyacetone phosphate + NADPH + H(+). The protein operates within membrane lipid metabolism; glycerophospholipid metabolism. Catalyzes the reduction of the glycolytic intermediate dihydroxyacetone phosphate (DHAP) to sn-glycerol 3-phosphate (G3P), the key precursor for phospholipid synthesis. The protein is Glycerol-3-phosphate dehydrogenase [NAD(P)+] 1 of Salinibacter ruber (strain DSM 13855 / M31).